The chain runs to 152 residues: Phosphoribosyl-AMP cyclohydrolase (152 aa).

Aspartate 92 contacts Mg(2+). Cysteine 93 contacts Zn(2+). Residues aspartate 94 and aspartate 96 each coordinate Mg(2+). Cysteine 111 and cysteine 118 together coordinate Zn(2+).

This sequence belongs to the PRA-CH family. Homodimer. The cofactor is Mg(2+). Zn(2+) serves as cofactor.

Its subcellular location is the cytoplasm. The enzyme catalyses 1-(5-phospho-beta-D-ribosyl)-5'-AMP + H2O = 1-(5-phospho-beta-D-ribosyl)-5-[(5-phospho-beta-D-ribosylamino)methylideneamino]imidazole-4-carboxamide. It functions in the pathway amino-acid biosynthesis; L-histidine biosynthesis; L-histidine from 5-phospho-alpha-D-ribose 1-diphosphate: step 3/9. Catalyzes the hydrolysis of the adenine ring of phosphoribosyl-AMP. The chain is Phosphoribosyl-AMP cyclohydrolase from Sinorhizobium fredii (strain NBRC 101917 / NGR234).